The primary structure comprises 85 residues: Transcriptional repressor protein KorC (85 aa).

Positions 28-47 (VLHLAGLTGGQAARILGLGA) form a DNA-binding region, H-T-H motif.

Acts with KorA as corepressor in the control of the kilC and kilE operons. The polypeptide is Transcriptional repressor protein KorC (korC) (Escherichia coli).